The chain runs to 155 residues: Ribosomal RNA large subunit methyltransferase H (155 aa).

Residues Leu73, Gly104, and 123–128 (LSPLTL) contribute to the S-adenosyl-L-methionine site.

It belongs to the RNA methyltransferase RlmH family. As to quaternary structure, homodimer.

It is found in the cytoplasm. It catalyses the reaction pseudouridine(1915) in 23S rRNA + S-adenosyl-L-methionine = N(3)-methylpseudouridine(1915) in 23S rRNA + S-adenosyl-L-homocysteine + H(+). Its function is as follows. Specifically methylates the pseudouridine at position 1915 (m3Psi1915) in 23S rRNA. This chain is Ribosomal RNA large subunit methyltransferase H, found in Azotobacter vinelandii (strain DJ / ATCC BAA-1303).